A 643-amino-acid polypeptide reads, in one-letter code: Threonine--tRNA ligase (643 aa).

The TGS domain maps to 1 to 61; it reads MIKITLKDGS…NEDSSLEICT (61 aa). A catalytic region spans residues 240-540; sequence DHNKLGRELG…LIEKYAGALP (301 aa). Zn(2+)-binding residues include cysteine 335, histidine 386, and histidine 517.

The protein belongs to the class-II aminoacyl-tRNA synthetase family. In terms of assembly, homodimer. Zn(2+) is required as a cofactor.

It localises to the cytoplasm. The enzyme catalyses tRNA(Thr) + L-threonine + ATP = L-threonyl-tRNA(Thr) + AMP + diphosphate + H(+). Functionally, catalyzes the attachment of threonine to tRNA(Thr) in a two-step reaction: L-threonine is first activated by ATP to form Thr-AMP and then transferred to the acceptor end of tRNA(Thr). Also edits incorrectly charged L-seryl-tRNA(Thr). The chain is Threonine--tRNA ligase from Clostridium perfringens (strain ATCC 13124 / DSM 756 / JCM 1290 / NCIMB 6125 / NCTC 8237 / Type A).